The sequence spans 1517 residues: DNA-directed RNA polymerase subunit beta' (1517 aa).

Zn(2+) contacts are provided by Cys-71, Cys-73, Cys-86, and Cys-89. Asp-482, Asp-484, and Asp-486 together coordinate Mg(2+). Residues Cys-812, Cys-886, Cys-893, and Cys-896 each contribute to the Zn(2+) site.

The protein belongs to the RNA polymerase beta' chain family. As to quaternary structure, the RNAP catalytic core consists of 2 alpha, 1 beta, 1 beta' and 1 omega subunit. When a sigma factor is associated with the core the holoenzyme is formed, which can initiate transcription. Requires Mg(2+) as cofactor. It depends on Zn(2+) as a cofactor.

The enzyme catalyses RNA(n) + a ribonucleoside 5'-triphosphate = RNA(n+1) + diphosphate. Its function is as follows. DNA-dependent RNA polymerase catalyzes the transcription of DNA into RNA using the four ribonucleoside triphosphates as substrates. The chain is DNA-directed RNA polymerase subunit beta' from Campylobacter jejuni subsp. jejuni serotype O:23/36 (strain 81-176).